The primary structure comprises 67 residues: Sec-independent protein translocase protein TatA (67 aa).

The helical transmembrane segment at Met-1 to Gly-21 threads the bilayer.

This sequence belongs to the TatA/E family. As to quaternary structure, the Tat system comprises two distinct complexes: a TatABC complex, containing multiple copies of TatA, TatB and TatC subunits, and a separate TatA complex, containing only TatA subunits. Substrates initially bind to the TatABC complex, which probably triggers association of the separate TatA complex to form the active translocon.

Its subcellular location is the cell inner membrane. In terms of biological role, part of the twin-arginine translocation (Tat) system that transports large folded proteins containing a characteristic twin-arginine motif in their signal peptide across membranes. TatA could form the protein-conducting channel of the Tat system. This chain is Sec-independent protein translocase protein TatA, found in Ruthia magnifica subsp. Calyptogena magnifica.